We begin with the raw amino-acid sequence, 517 residues long: Crotonobetaine/carnitine--CoA ligase (517 aa).

It belongs to the ATP-dependent AMP-binding enzyme family.

The enzyme catalyses 4-(trimethylamino)butanoate + ATP + CoA = 4-(trimethylamino)butanoyl-CoA + AMP + diphosphate. It carries out the reaction crotonobetaine + ATP + CoA = crotonobetainyl-CoA + AMP + diphosphate. The catalysed reaction is (R)-carnitine + ATP + CoA = (R)-carnitinyl-CoA + AMP + diphosphate. It participates in amine and polyamine metabolism; carnitine metabolism. Functionally, catalyzes the transfer of CoA to carnitine, generating the initial carnitinyl-CoA needed for the CaiB reaction cycle. Also has activity toward crotonobetaine and gamma-butyrobetaine. This is Crotonobetaine/carnitine--CoA ligase from Salmonella choleraesuis (strain SC-B67).